Consider the following 272-residue polypeptide: MSSYAPREIPLDIRLMQGTSRALFWLVALGCLFVAGHWLMQRNWWDIRAVRLQGDLQRISPVTVRAEALPQLRGNFLTINLAQAQRVFESLPWVRTAVVQRLWPMQLAVTLQAQQPVAIWREPGSAAQLVNTQGQAFTANLGEVQGLGLPQLSGPAGTSAQVLQMSQKLQPLMQEFHQTVATLAQGSGGNWSVQTRSGLSIDLGSAPDSAATQTRLKQFMTLMPQLEARYGRSIDSVDLRYPNGFAVHLQGVDLPGMNKTSNKTPQPAGRKD.

The Cytoplasmic portion of the chain corresponds to M1–S20. The chain crosses the membrane as a helical span at residues R21–M40. Topologically, residues Q41–D272 are periplasmic. One can recognise a POTRA domain in the interval W45–Q114.

It belongs to the FtsQ/DivIB family. FtsQ subfamily. In terms of assembly, part of a complex composed of FtsB, FtsL and FtsQ.

It is found in the cell inner membrane. In terms of biological role, essential cell division protein. May link together the upstream cell division proteins, which are predominantly cytoplasmic, with the downstream cell division proteins, which are predominantly periplasmic. May control correct divisome assembly. This Thiomonas arsenitoxydans (strain DSM 22701 / CIP 110005 / 3As) protein is Cell division protein FtsQ.